A 181-amino-acid chain; its full sequence is MPLPQVRATTILAVRRNGQVAIGGDGQVSVGDTVAKQRAVKVRTLKGGRVLAGFAGSVADALTLFEKFEEKLERYPGNLPRASVELAKEWRSDRVLRRLEAMLIVADVEHGFMLSGNGELIEPDDGILAIGSGGAYAQAAARALMRETQLPPRDIVEKALTIAGEICIYTNTNITVLEPTR.

Threonine 9 is an active-site residue. 3 residues coordinate Na(+): glycine 164, cysteine 167, and threonine 170.

Belongs to the peptidase T1B family. HslV subfamily. As to quaternary structure, a double ring-shaped homohexamer of HslV is capped on each side by a ring-shaped HslU homohexamer. The assembly of the HslU/HslV complex is dependent on binding of ATP.

It is found in the cytoplasm. The catalysed reaction is ATP-dependent cleavage of peptide bonds with broad specificity.. Allosterically activated by HslU binding. Protease subunit of a proteasome-like degradation complex believed to be a general protein degrading machinery. The chain is ATP-dependent protease subunit HslV from Gemmatimonas aurantiaca (strain DSM 14586 / JCM 11422 / NBRC 100505 / T-27).